The primary structure comprises 921 residues: Isoleucine--tRNA ligase (921 aa).

A 'HIGH' region motif is present at residues 59 to 69 (PYANGHLHIGH). Residue Glu-569 coordinates L-isoleucyl-5'-AMP. The short motif at 610–614 (KMSKS) is the 'KMSKS' region element. Residue Lys-613 coordinates ATP. Residues Cys-894, Cys-897, Cys-909, and Cys-912 each contribute to the Zn(2+) site.

The protein belongs to the class-I aminoacyl-tRNA synthetase family. IleS type 1 subfamily. As to quaternary structure, monomer. Zn(2+) is required as a cofactor.

Its subcellular location is the cytoplasm. It carries out the reaction tRNA(Ile) + L-isoleucine + ATP = L-isoleucyl-tRNA(Ile) + AMP + diphosphate. Functionally, catalyzes the attachment of isoleucine to tRNA(Ile). As IleRS can inadvertently accommodate and process structurally similar amino acids such as valine, to avoid such errors it has two additional distinct tRNA(Ile)-dependent editing activities. One activity is designated as 'pretransfer' editing and involves the hydrolysis of activated Val-AMP. The other activity is designated 'posttransfer' editing and involves deacylation of mischarged Val-tRNA(Ile). The sequence is that of Isoleucine--tRNA ligase from Campylobacter lari (strain RM2100 / D67 / ATCC BAA-1060).